A 92-amino-acid chain; its full sequence is Small ribosomal subunit protein uS19c (92 aa).

It belongs to the universal ribosomal protein uS19 family.

The protein localises to the plastid. The protein resides in the chloroplast. Protein S19 forms a complex with S13 that binds strongly to the 16S ribosomal RNA. The chain is Small ribosomal subunit protein uS19c from Phalaenopsis aphrodite subsp. formosana (Moth orchid).